Consider the following 361-residue polypeptide: UDP-3-O-acylglucosamine N-acyltransferase (361 aa).

H258 (proton acceptor) is an active-site residue.

It belongs to the transferase hexapeptide repeat family. LpxD subfamily. Homotrimer.

The catalysed reaction is a UDP-3-O-[(3R)-3-hydroxyacyl]-alpha-D-glucosamine + a (3R)-hydroxyacyl-[ACP] = a UDP-2-N,3-O-bis[(3R)-3-hydroxyacyl]-alpha-D-glucosamine + holo-[ACP] + H(+). It participates in bacterial outer membrane biogenesis; LPS lipid A biosynthesis. In terms of biological role, catalyzes the N-acylation of UDP-3-O-acylglucosamine using 3-hydroxyacyl-ACP as the acyl donor. Is involved in the biosynthesis of lipid A, a phosphorylated glycolipid that anchors the lipopolysaccharide to the outer membrane of the cell. In Nitrobacter hamburgensis (strain DSM 10229 / NCIMB 13809 / X14), this protein is UDP-3-O-acylglucosamine N-acyltransferase.